The following is a 196-amino-acid chain: Pyridoxal 5'-phosphate synthase subunit PdxT (196 aa).

56-58 is an L-glutamine binding site; that stretch reads GES. Cysteine 85 serves as the catalytic Nucleophile. L-glutamine-binding positions include arginine 113 and 141 to 142; that span reads IR. Active-site charge relay system residues include histidine 177 and glutamate 179.

The protein belongs to the glutaminase PdxT/SNO family. In the presence of PdxS, forms a dodecamer of heterodimers. Only shows activity in the heterodimer.

It catalyses the reaction aldehydo-D-ribose 5-phosphate + D-glyceraldehyde 3-phosphate + L-glutamine = pyridoxal 5'-phosphate + L-glutamate + phosphate + 3 H2O + H(+). The enzyme catalyses L-glutamine + H2O = L-glutamate + NH4(+). Its pathway is cofactor biosynthesis; pyridoxal 5'-phosphate biosynthesis. In terms of biological role, catalyzes the hydrolysis of glutamine to glutamate and ammonia as part of the biosynthesis of pyridoxal 5'-phosphate. The resulting ammonia molecule is channeled to the active site of PdxS. This chain is Pyridoxal 5'-phosphate synthase subunit PdxT, found in Methanospirillum hungatei JF-1 (strain ATCC 27890 / DSM 864 / NBRC 100397 / JF-1).